A 219-amino-acid chain; its full sequence is uncharacterized protein (219 aa).

A disordered region spans residues 42–71; it reads RQPRVVPVTSSDPEVVDDEDDEDQSDDSDE. Over residues 45–54 the composition is skewed to low complexity; it reads RVVPVTSSDP. The span at 55-71 shows a compositional bias: acidic residues; the sequence is EVVDDEDDEDQSDDSDE.

This is an uncharacterized protein from Dryophytes versicolor (chameleon treefrog).